Here is an 806-residue protein sequence, read N- to C-terminus: MSGWPRIYYKLLNLPLSVLVKSKSIPAEPALELGLDTSRPIMYVLPYNSKADLLTLRAQCLAHDLPDPLEPLEIDGTLLPRYVFIHGGPRVFTYYTPKEESIKLFHDYLDLHRSNPDLDVQMVPVSVMFGRRPGRQKGEENPPLRMLNGVQKFFAVSWLGRDSFVRFSPSVSLRHMADEHGTDKIIAQKLARVARMHFARQRLAAVGPRLPARQDLFNKLLASKAIARAVEDEARSKKISHEKAQQNAIALMEEIAANFSYEMIRLSDRILSFTWNRLYQGINVHNAERVRQLAHDGHEIVYVPCHRSHMDYLLLSYVLYHQGLVPPHIAAGINLNFWPAGPIFRRLGAFFIRRTFKGNKLYSTVFREYLGELFSRGYSVEYFVEGGRSRTGRLLDPKTGTLSMTIQAMLRGGTRPITLVPIYIGYEHVMEVGTYAKELRGATKEKESLPQMLRGLSKLRNLGQGYVNFGEPMPLMTYLNHHVPEWRESIDPIEAIRPAWLTPTVNNIAADLMVRINNAGAANAMNLCCTALLASRQRSLTREQLTEQLDCYLDMMRHVPYSTDSTVPSVTAGQLIDHALQMNKFEVEKDTIGDIIILPREQAVLMTYYRNNIAHMLMLPSLMAAIITQHRRISRQEILRHVEVLYPMLKAELFLRWSKDELAAELDKLTEELLRQGLIAVKGDELHINPSRSRTLQLLAAGARETLQRYAITFWLLSANPSINRGTLEKESRTLAQRLSVLHGINAPEFFDKAVFSSLVLTLRDEGYISDTGDAEPGETMKVYQMLAELITSDVRLTIESATQDE.

An HXXXXD motif motif is present at residues 305–310; the sequence is CHRSHM.

Belongs to the GPAT/DAPAT family.

It localises to the cell inner membrane. The enzyme catalyses sn-glycerol 3-phosphate + an acyl-CoA = a 1-acyl-sn-glycero-3-phosphate + CoA. It functions in the pathway phospholipid metabolism; CDP-diacylglycerol biosynthesis; CDP-diacylglycerol from sn-glycerol 3-phosphate: step 1/3. The sequence is that of Glycerol-3-phosphate acyltransferase from Enterobacter sp. (strain 638).